The following is a 238-amino-acid chain: Probable septum site-determining protein MinC (238 aa).

The protein belongs to the MinC family. Interacts with MinD and FtsZ.

In terms of biological role, cell division inhibitor that blocks the formation of polar Z ring septums. Rapidly oscillates between the poles of the cell to destabilize FtsZ filaments that have formed before they mature into polar Z rings. Prevents FtsZ polymerization. This is Probable septum site-determining protein MinC from Xylella fastidiosa (strain M23).